Consider the following 456-residue polypeptide: Cytochrome c biogenesis protein CcsB (456 aa).

The next 3 helical transmembrane spans lie at 29–49 (LRLA…GTVI), 88–108 (AGWF…CTFR), and 174–194 (VGPI…IWGS).

Belongs to the Ccs1/CcsB family. In terms of assembly, may interact with CcsA.

It is found in the cellular thylakoid membrane. Its function is as follows. Required during biogenesis of c-type cytochromes (cytochrome c6 and cytochrome f) at the step of heme attachment. The chain is Cytochrome c biogenesis protein CcsB from Synechococcus sp. (strain ATCC 27144 / PCC 6301 / SAUG 1402/1) (Anacystis nidulans).